Consider the following 198-residue polypeptide: T-cell surface glycoprotein CD3 epsilon chain (198 aa).

The N-terminal stretch at 1-21 is a signal peptide; it reads MQSGTRWRVLGLCLLSIGVWG. Topologically, residues 22 to 117 are extracellular; sequence QDGNEEMGSI…RVCENCMEMD (96 aa). The Ig-like domain occupies 37-107; that stretch reads QVSISGTTVI…DASHHLYLKA (71 aa). A disulfide bridge links Cys49 with Cys89. Residues 118–138 traverse the membrane as a helical segment; the sequence is VMAVATIVIVDICITLGLLLL. The Cytoplasmic segment spans residues 139-198; sequence VYYWSKNRKAKAKPVTRGAGAGGRQRGQNKERPPPVPNPDYEPIRKGQQDLYSGLNQRRI. Positions 152-198 are disordered; the sequence is PVTRGAGAGGRQRGQNKERPPPVPNPDYEPIRKGQQDLYSGLNQRRI. Residues 166–183 are NUMB-binding region; the sequence is QNKERPPPVPNPDYEPIR. Residues 169–196 form the ITAM domain; that stretch reads ERPPPVPNPDYEPIRKGQQDLYSGLNQR. Positions 170-177 are proline-rich sequence; it reads RPPPVPNP. A phosphotyrosine mark is found at Tyr179 and Tyr190. A compositionally biased stretch (polar residues) spans 188 to 198; that stretch reads DLYSGLNQRRI.

As to quaternary structure, the TCR-CD3 complex is composed of a CD3D/CD3E and a CD3G/CD3E heterodimers that preferentially associate with TCRalpha and TCRbeta, respectively, to form TCRalpha/CD3E/CD3G and TCRbeta/CD3G/CD3E trimers. In turn, the hexamer interacts with CD3Z homodimer to form the TCR-CD3 complex. Alternatively, TCRalpha and TCRbeta can be replaced by TCRgamma and TCRdelta. Interacts with CD6. Interacts (via Proline-rich sequence) with NCK1; the interaction is ligand dependent but independent of tyrosine kinase activation. Post-translationally, phosphorylated on Tyr residues after T-cell receptor triggering by LCK in association with CD4/CD8.

It is found in the cell membrane. Part of the TCR-CD3 complex present on T-lymphocyte cell surface that plays an essential role in adaptive immune response. When antigen presenting cells (APCs) activate T-cell receptor (TCR), TCR-mediated signals are transmitted across the cell membrane by the CD3 chains CD3D, CD3E, CD3G and CD3Z. All CD3 chains contain immunoreceptor tyrosine-based activation motifs (ITAMs) in their cytoplasmic domain. Upon TCR engagement, these motifs become phosphorylated by Src family protein tyrosine kinases LCK and FYN, resulting in the activation of downstream signaling pathways. In addition of this role of signal transduction in T-cell activation, CD3E plays an essential role in correct T-cell development. Also participates in internalization and cell surface down-regulation of TCR-CD3 complexes via endocytosis sequences present in CD3E cytosolic region. In addition to its role as a TCR coreceptor, it serves as a receptor for ITPRIPL1. Ligand recognition inhibits T-cell activation by promoting interaction with NCK1, which prevents CD3E-ZAP70 interaction and blocks the ERK-NFkB signaling cascade and calcium influx. This is T-cell surface glycoprotein CD3 epsilon chain (CD3E) from Macaca fascicularis (Crab-eating macaque).